The sequence spans 122 residues: Large ribosomal subunit protein uL14 (122 aa).

This sequence belongs to the universal ribosomal protein uL14 family. Part of the 50S ribosomal subunit. Forms a cluster with proteins L3 and L19. In the 70S ribosome, L14 and L19 interact and together make contacts with the 16S rRNA in bridges B5 and B8.

In terms of biological role, binds to 23S rRNA. Forms part of two intersubunit bridges in the 70S ribosome. The chain is Large ribosomal subunit protein uL14 from Rickettsia bellii (strain OSU 85-389).